The primary structure comprises 635 residues: MIKITLKDGSVREYAVGTTVLEVAKSISQGLAREALAGKVNGKIVDLEYPLKEDAALELLTFNDEEGKTVYRHSTAHVLAQAVKRLFPDAKLAIGPAIQDGYYYDFDVEQPFTPAQLERIEEEMNKIIKEDIPFKRVELSREEALEHFKKQDEIYKIELITDLPEDAVISCYQQGDFDDLCAGPHVPSTGRLKSLKLMSIAGAYWRGSEKNKMLQRIYGTSFPKKAMLDEHLFRIEEAKRRDHRKLGQELDLFSIQEEGPGFPFFHPKGMVLRNELENFWRQEHKKRGYQEIRTPIILNRSMWEQSGHWAHYKDNMYFTKIDEADYAVKPMNCPGSILVYKTRMHSYRDLPLRWGELGLVHRHELSGALHGLMRVRCFTQDDAHIFMLPSQIKDEIIGVIDLFDYFYNTFGLNYHVELSTRPEKSMGSDEMWEVATNSLRDALEAKKMDYKVNEGDGAFYGPKIDFHLTDSLGRTWQCGTIQLDFQMPERFNLNYVGEDGQKHRPVMIHRVVFGSIERFIGILTEHFAGAFPVWLAPVQVKVLPITDRHHEYARELVKRLQGLDIRVELDARNEKINYKIREAQTQKIPYMLVIGDREMEQGAVAVRERGKGDVGAISVGDFIKKIEDDIQNKTI.

In terms of domain architecture, TGS spans 1–61; sequence MIKITLKDGS…KEDAALELLT (61 aa). The catalytic stretch occupies residues 242 to 532; it reads DHRKLGQELD…LTEHFAGAFP (291 aa). 3 residues coordinate Zn(2+): Cys-333, His-384, and His-509.

The protein belongs to the class-II aminoacyl-tRNA synthetase family. In terms of assembly, homodimer. The cofactor is Zn(2+).

It is found in the cytoplasm. It catalyses the reaction tRNA(Thr) + L-threonine + ATP = L-threonyl-tRNA(Thr) + AMP + diphosphate + H(+). Catalyzes the attachment of threonine to tRNA(Thr) in a two-step reaction: L-threonine is first activated by ATP to form Thr-AMP and then transferred to the acceptor end of tRNA(Thr). Also edits incorrectly charged L-seryl-tRNA(Thr). In Desulforamulus reducens (strain ATCC BAA-1160 / DSM 100696 / MI-1) (Desulfotomaculum reducens), this protein is Threonine--tRNA ligase.